The primary structure comprises 147 residues: MRLSDYFPESSISVIHSAKDWQEAIDFSMVSLLDKNYISENYIQAIKDSTINNGPYYILAPGVAMPHARPECGALKTGMSLTLLEQGVYFPGNDEPIKLLIGLSAADADSHIGAIQALSELLCEEEILEQLLTASSEKQLADIISRG.

The PTS EIIA type-2 domain occupies 5 to 147 (DYFPESSISV…KQLADIISRG (143 aa)). Histidine 67 serves as the catalytic Tele-phosphohistidine intermediate. A Phosphohistidine; by HPr modification is found at histidine 67.

The protein localises to the cytoplasm. Functionally, the phosphoenolpyruvate-dependent sugar phosphotransferase system (sugar PTS), a major carbohydrate active transport system, catalyzes the phosphorylation of incoming sugar substrates concomitantly with their translocation across the cell membrane. The enzyme II CmtAB PTS system is involved in D-mannitol transport. This chain is Mannitol-specific cryptic phosphotransferase enzyme IIA component (cmtB), found in Escherichia coli O157:H7.